We begin with the raw amino-acid sequence, 289 residues long: Energy-coupling factor transporter ATP-binding protein EcfA2 (289 aa).

Residues 3-245 form the ABC transporter domain; the sequence is IEFKNVDYVY…QEWVKKHYLD (243 aa). 40–47 is an ATP binding site; the sequence is GHTGSGKS.

This sequence belongs to the ABC transporter superfamily. Energy-coupling factor EcfA family. As to quaternary structure, forms a stable energy-coupling factor (ECF) transporter complex composed of 2 membrane-embedded substrate-binding proteins (S component), 2 ATP-binding proteins (A component) and 2 transmembrane proteins (T component).

The protein localises to the cell membrane. Its function is as follows. ATP-binding (A) component of a common energy-coupling factor (ECF) ABC-transporter complex. Unlike classic ABC transporters this ECF transporter provides the energy necessary to transport a number of different substrates. The protein is Energy-coupling factor transporter ATP-binding protein EcfA2 of Lactobacillus johnsonii (strain CNCM I-12250 / La1 / NCC 533).